Consider the following 133-residue polypeptide: Protransforming growth factor alpha (133 aa).

A signal peptide spans 1-23; that stretch reads MVPSAGQLALFALGIFLAVCQAL. The propeptide at 24 to 38 is removed in mature form; the sequence is ENSTSALSDPPVAAA. At 24–97 the chain is on the extracellular side; the sequence is ENSTSALSDP…AVVAASQKKQ (74 aa). A glycan (N-linked (GlcNAc...) asparagine) is linked at N25. Residues 42-82 form the EGF-like domain; it reads HFNDCPDSHTQFCFHGTCRFLLQEEKPACVCHSGYVGARCE. Intrachain disulfides connect C46–C59, C54–C70, and C72–C81. Residues 89–133 constitute a propeptide, removed in mature form; the sequence is VVAASQKKQAITALVVVTIVALAVLIITCVLIHCCEVRKHSVVVP. The helical transmembrane segment at 98 to 120 threads the bilayer; that stretch reads AITALVVVTIVALAVLIITCVLI. The Cytoplasmic portion of the chain corresponds to 121-133; the sequence is HCCEVRKHSVVVP.

As to quaternary structure, interacts with the PDZ domains of MAGI3, SDCBP and SNTA1. The interaction with SDCBP, is required for the targeting to the cell surface. In the endoplasmic reticulum, in its immature form (i.e. with a prosegment and lacking full N-glycosylation), interacts with CNIH. In the Golgi apparatus, may form a complex with CNIH and GORASP2. Interacts (via cytoplasmic C-terminal domain) with NKD2. Skin.

The protein localises to the secreted. Its subcellular location is the extracellular space. It localises to the cell membrane. In terms of biological role, TGF alpha is a mitogenic polypeptide that is able to bind to the EGF receptor/EGFR and to act synergistically with TGF beta to promote anchorage-independent cell proliferation in soft agar. The sequence is that of Protransforming growth factor alpha (TGFA) from Ovis aries (Sheep).